A 777-amino-acid polypeptide reads, in one-letter code: Polyribonucleotide nucleotidyltransferase (777 aa).

Mg(2+) is bound by residues aspartate 494 and aspartate 500. Residues 561 to 620 (PRIITLQIDPSKIGALIGPGGKTIRSIIEQTGAQIDVEDDGRVFVTTPDADGARMAQSLI) enclose the KH domain. The S1 motif domain occupies 630 to 699 (GEIFTGKVVR…GTGKLSLSRR (70 aa)). The interval 703-777 (TGETAEQRKS…NDRRGGGFRG (75 aa)) is disordered. Gly residues predominate over residues 718–727 (GPRGGGGGGD). 2 stretches are compositionally biased toward basic and acidic residues: residues 728-761 (RGPRPGGDRGPRPEGDRGPRPEGDRPREGGDRGP) and 768-777 (NDRRGGGFRG).

This sequence belongs to the polyribonucleotide nucleotidyltransferase family. Mg(2+) serves as cofactor.

The protein resides in the cytoplasm. It carries out the reaction RNA(n+1) + phosphate = RNA(n) + a ribonucleoside 5'-diphosphate. Its function is as follows. Involved in mRNA degradation. Catalyzes the phosphorolysis of single-stranded polyribonucleotides processively in the 3'- to 5'-direction. This is Polyribonucleotide nucleotidyltransferase from Herpetosiphon aurantiacus (strain ATCC 23779 / DSM 785 / 114-95).